A 366-amino-acid chain; its full sequence is MTPEHLPTEQYEAQLAEKVVRLQSMMAPFSDLVPEVFRSPVSHYRMRAEFRIWHDGDDLYHIIFDQQTKSRIRVDSFPAASELINQLMTAMIAGVRNNPVLRHKLFQIDYLTTLSNQAVVSLLYHKKLDDEWRQEAEALRDALRAQNLNVHLIGRATKTKIALDQDYIDERLPVAGKEMIYRQVENSFTQPNAAMNIQMLEWALDVTKGSKGDLLELYCGNGNFSLALARNFDRVLATEIAKPSVAAAQYNITANHIDNVQIIRMAAEEFTQAMNGVREFNRLQGIDLKSYQFETIFVDPPRSGLDSETEKMVQAYPRILYISCNPETLCKNLETLSQTHKVERLALFDQFPYTHHMECGVLLTAK.

Positions 190, 218, 223, 239, and 299 each coordinate S-adenosyl-L-methionine. The active-site Nucleophile is the C324. E358 (proton acceptor) is an active-site residue.

This sequence belongs to the class I-like SAM-binding methyltransferase superfamily. RNA M5U methyltransferase family. TrmA subfamily.

The catalysed reaction is uridine(54) in tRNA + S-adenosyl-L-methionine = 5-methyluridine(54) in tRNA + S-adenosyl-L-homocysteine + H(+). It carries out the reaction uridine(341) in tmRNA + S-adenosyl-L-methionine = 5-methyluridine(341) in tmRNA + S-adenosyl-L-homocysteine + H(+). Its function is as follows. Dual-specificity methyltransferase that catalyzes the formation of 5-methyluridine at position 54 (m5U54) in all tRNAs, and that of position 341 (m5U341) in tmRNA (transfer-mRNA). This is tRNA/tmRNA (uracil-C(5))-methyltransferase from Shigella flexneri serotype 5b (strain 8401).